The following is a 159-amino-acid chain: RNA pyrophosphohydrolase (159 aa).

In terms of domain architecture, Nudix hydrolase spans 6–149 (GYRPNVGIVI…KRNVYRRMMK (144 aa)). The short motif at 38-59 (GGINSGETAEQAMFRELFEEVG) is the Nudix box element.

The protein belongs to the Nudix hydrolase family. RppH subfamily. It depends on a divalent metal cation as a cofactor.

Functionally, accelerates the degradation of transcripts by removing pyrophosphate from the 5'-end of triphosphorylated RNA, leading to a more labile monophosphorylated state that can stimulate subsequent ribonuclease cleavage. The sequence is that of RNA pyrophosphohydrolase from Baumannia cicadellinicola subsp. Homalodisca coagulata.